A 257-amino-acid polypeptide reads, in one-letter code: UPF0246 protein Spea_1078 (257 aa).

The protein belongs to the UPF0246 family.

This is UPF0246 protein Spea_1078 from Shewanella pealeana (strain ATCC 700345 / ANG-SQ1).